The sequence spans 257 residues: Flagellar brake protein YcgR 1 (257 aa).

Residues 1–18 (MDTTQSNGQTDTQGQLHA) show a composition bias toward polar residues. Residues 1–30 (MDTTQSNGQTDTQGQLHAQTAEGGNDFGRR) form a disordered region. Residues 133 to 246 (QRREYFRVDA…AENTLQRLIT (114 aa)) enclose the PilZ domain.

It belongs to the YcgR family. As to quaternary structure, monomer. Interacts with the flagellar basal bodies.

It localises to the bacterial flagellum basal body. Functionally, acts as a flagellar brake, regulating swimming and swarming in a bis-(3'-5') cyclic diguanylic acid (c-di-GMP)-dependent manner. Binds 1 c-di-GMP dimer per subunit. Increasing levels of c-di-GMP lead to decreased motility. The polypeptide is Flagellar brake protein YcgR 1 (Paraburkholderia phytofirmans (strain DSM 17436 / LMG 22146 / PsJN) (Burkholderia phytofirmans)).